We begin with the raw amino-acid sequence, 507 residues long: Ribonuclease Y (507 aa).

Residues 1–21 (MLWYIVAGAGGLLIGYLIASY) form a helical membrane-spanning segment. Residues 197–282 (TVSTVSLPSD…EMYEKAKQEV (86 aa)) form the KH domain. One can recognise an HD domain in the interval 323-416 (VLNHSIEVAL…VAAADALSAA (94 aa)).

This sequence belongs to the RNase Y family.

Its subcellular location is the cell membrane. Functionally, endoribonuclease that initiates mRNA decay. The chain is Ribonuclease Y from Thermotoga petrophila (strain ATCC BAA-488 / DSM 13995 / JCM 10881 / RKU-1).